The primary structure comprises 291 residues: ATP synthase gamma chain (291 aa).

It belongs to the ATPase gamma chain family. In terms of assembly, F-type ATPases have 2 components, CF(1) - the catalytic core - and CF(0) - the membrane proton channel. CF(1) has five subunits: alpha(3), beta(3), gamma(1), delta(1), epsilon(1). CF(0) has three main subunits: a, b and c.

The protein resides in the cell membrane. Functionally, produces ATP from ADP in the presence of a proton gradient across the membrane. The gamma chain is believed to be important in regulating ATPase activity and the flow of protons through the CF(0) complex. This Streptococcus equi subsp. equi (strain 4047) protein is ATP synthase gamma chain.